A 154-amino-acid chain; its full sequence is Large ribosomal subunit protein uL13 (154 aa).

Residues 129-154 are disordered; sequence SQHPHEAQQPEALDVGTLNRKNKRIA.

This sequence belongs to the universal ribosomal protein uL13 family. As to quaternary structure, part of the 50S ribosomal subunit.

In terms of biological role, this protein is one of the early assembly proteins of the 50S ribosomal subunit, although it is not seen to bind rRNA by itself. It is important during the early stages of 50S assembly. The chain is Large ribosomal subunit protein uL13 from Bartonella bacilliformis (strain ATCC 35685 / KC583 / Herrer 020/F12,63).